The chain runs to 241 residues: Proteasome subunit beta type-1 (241 aa).

Met1 bears the N-acetylmethionine mark. Positions 1–28 (MLSSTAMYSAPGRDLGMEPHRAAGPLQL) are excised as a propeptide. Residue Ser58 is glycosylated (O-linked (GlcNAc) serine). Residues Ser62 and Ser68 each carry the phosphoserine modification. Tyr150 carries the phosphotyrosine modification. Ser162 is subject to Phosphoserine. An N6-acetyllysine modification is found at Lys204. Ser209 carries an O-linked (GlcNAc) serine glycan.

It belongs to the peptidase T1B family. The 26S proteasome consists of a 20S proteasome core and two 19S regulatory subunits. The 20S proteasome core is a barrel-shaped complex made of 28 subunits that are arranged in four stacked rings. The two outer rings are each formed by seven alpha subunits, and the two inner rings are formed by seven beta subunits. The proteolytic activity is exerted by three beta-subunits PSMB5, PSMB6 and PSMB7. Interacts with SERPINB2. Interacts with RFPL4A. As to quaternary structure, (Microbial infection) Interacts with HIV-1 protein Tat.

The protein resides in the cytoplasm. The protein localises to the nucleus. Its function is as follows. Non-catalytic component of the 20S core proteasome complex involved in the proteolytic degradation of most intracellular proteins. This complex plays numerous essential roles within the cell by associating with different regulatory particles. Associated with two 19S regulatory particles, forms the 26S proteasome and thus participates in the ATP-dependent degradation of ubiquitinated proteins. The 26S proteasome plays a key role in the maintenance of protein homeostasis by removing misfolded or damaged proteins that could impair cellular functions, and by removing proteins whose functions are no longer required. Associated with the PA200 or PA28, the 20S proteasome mediates ubiquitin-independent protein degradation. This type of proteolysis is required in several pathways including spermatogenesis (20S-PA200 complex) or generation of a subset of MHC class I-presented antigenic peptides (20S-PA28 complex). The polypeptide is Proteasome subunit beta type-1 (Homo sapiens (Human)).